The following is a 1446-amino-acid chain: ABC transporter G family member 53 (1446 aa).

One can recognise an ABC transporter 1 domain in the interval 153 to 426; that stretch reads ANTLHITPNR…FESVGFKCPE (274 aa). 186–193 contacts ATP; the sequence is GPPGAGKT. The 214-residue stretch at 504–717 folds into the ABC transmembrane type-2 1 domain; the sequence is ELLKANIDRE…AQNAISVNEF (214 aa). 6 helical membrane-spanning segments follow: residues 523–543, 555–575, 610–630, 641–661, 666–686, and 752–772; these read VYIF…TVFI, GGIY…NGLA, TPLS…VIGF, FLLL…IAGF, VVAS…GGFI, and IGVG…TICL. In terms of domain architecture, ABC transporter 2 spans 849-1101; the sequence is ITFEDIRYSV…ELIRYFESIE (253 aa). 894 to 901 provides a ligand contact to ATP; that stretch reads GVSGAGKT. Residues 1174–1388 form the ABC transmembrane type-2 2 domain; it reads TQCLACLWKQ…TLYGLVTSQF (215 aa). 7 helical membrane passes run 1195–1215, 1225–1242, 1281–1301, 1308–1328, 1338–1358, 1363–1383, and 1415–1435; these read AVKY…FWGV, LFNA…MGVQ, LPYI…MIGF, FFWY…YGMM, VASV…GFII, IPIW…LYGL, and FLWV…FLFG.

This sequence belongs to the ABC transporter superfamily. ABCG family. PDR (TC 3.A.1.205) subfamily.

Its subcellular location is the membrane. In terms of biological role, may be a general defense protein. The polypeptide is ABC transporter G family member 53 (Oryza sativa subsp. japonica (Rice)).